The chain runs to 58 residues: Small ribosomal subunit protein bS21 (58 aa).

It belongs to the bacterial ribosomal protein bS21 family.

This is Small ribosomal subunit protein bS21 from Latilactobacillus sakei subsp. sakei (strain 23K) (Lactobacillus sakei subsp. sakei).